The primary structure comprises 370 residues: MELGCPELLEPPEDIFSTGSFLELGFNGPASKVPVTRGLQKSEPDDFLNLFIDPNMIHCSETSPGRDSGVSEDPGSPAQQASSSPALYEVVYDSGTLQGTQREAGPTFGLISIQIDQWTPALMVPDACTVSGLPSDSHRHILPRVSTRAPAPPAAMPSCQHHLFLTDEEKQLLAQEGITLPSHLPLTKAEERILKKIRRKIRNKQSAQDSRRRKKEYLDGLESRVAACSEQNQKLQRKVQELERQNIFLMEQVRQLQKLTAQTSSRAAQTSTCVLILLFSLALIILPSFSPFQGQSEARPEDYQLHGVISRNILTHENVTENLESPVLKSKLEELPEAPTTNGSTKTHLKMRVKARPPGQIRGMVHTDEM.

The interval Met1–Asn55 is required for transcriptional activation. The Cytoplasmic segment spans residues Met1–Ser271. The disordered stretch occupies residues Glu61 to Pro85. Residues Ser76–Pro85 are compositionally biased toward low complexity. One can recognise a bZIP domain in the interval Ile193–Leu256. Residues Lys195–Lys234 are basic motif. Residues Leu235–Leu256 form a leucine-zipper region. The chain crosses the membrane as a helical; Signal-anchor for type II membrane protein span at residues Thr272 to Phe292. Residues Gln293–Met370 are Lumenal-facing. N-linked (GlcNAc...) asparagine glycans are attached at residues Asn318 and Asn342.

It belongs to the bZIP family. ATF subfamily. Binds DNA as a dimer. Forms a heterodimer with CREM isoform Tau. In terms of processing, controlled by regulated intramembrane proteolysis (RIP). Following ER stress a fragment containing the cytoplasmic transcription factor domain is released by proteolysis. The cleavage seems to be performed sequentially by site-1 and site-2 proteases (PS1 and PS2). PS1 cleavage may be suppressed by a determinant in the C-terminal region. In terms of tissue distribution, predominantly expressed at high levels in testis with isoform 2 being the predominant isoform. Specifically expressed in postmeiotic spermatids and accumulates in the mid/late stage (at protein level). Ubiquitously expressed at low levels.

It is found in the endoplasmic reticulum membrane. It localises to the cytoplasmic vesicle. The protein localises to the secretory vesicle. The protein resides in the acrosome inner membrane. Its subcellular location is the nucleus. Transcriptional activator that may play a role in the unfolded protein response of the testis. Proposed to be involved in spermiogenesis. May be involved in regulating the maturation of sperm head nuclei. Alternatively proposed to be a paternally delivered transcription factor that may function in early zygotic gene activation. Increases the binding of CREM isoform Tau with CRE. The CREM isoform Tau-CREB3L4 heterodimer functions through CRE but not through UPRE and may recruit HIRA to CRE to regulate histone exchange. The sequence is that of Cyclic AMP-responsive element-binding protein 3-like protein 4 (Creb3l4) from Mus musculus (Mouse).